Reading from the N-terminus, the 137-residue chain is Peptide methionine sulfoxide reductase MsrB (137 aa).

Residues 7 to 129 (VDDLKENLSE…NSASLSFTDE (123 aa)) form the MsrB domain. Positions 46, 49, 95, and 98 each coordinate Zn(2+). The active-site Nucleophile is Cys-118.

The protein belongs to the MsrB Met sulfoxide reductase family. Zn(2+) is required as a cofactor.

It catalyses the reaction L-methionyl-[protein] + [thioredoxin]-disulfide + H2O = L-methionyl-(R)-S-oxide-[protein] + [thioredoxin]-dithiol. This chain is Peptide methionine sulfoxide reductase MsrB, found in Escherichia fergusonii (strain ATCC 35469 / DSM 13698 / CCUG 18766 / IAM 14443 / JCM 21226 / LMG 7866 / NBRC 102419 / NCTC 12128 / CDC 0568-73).